A 136-amino-acid chain; its full sequence is Large ribosomal subunit protein uL16c (136 aa).

Residues 1–20 (MLSPKRTRFRKQHRGRMKGK) are disordered.

This sequence belongs to the universal ribosomal protein uL16 family. As to quaternary structure, part of the 50S ribosomal subunit.

Its subcellular location is the plastid. It is found in the chloroplast. The polypeptide is Large ribosomal subunit protein uL16c (Agrostis stolonifera (Creeping bentgrass)).